A 99-amino-acid chain; its full sequence is Large ribosomal subunit protein bL25 (99 aa).

Belongs to the bacterial ribosomal protein bL25 family. As to quaternary structure, part of the 50S ribosomal subunit; part of the 5S rRNA/L5/L18/L25 subcomplex. Contacts the 5S rRNA. Binds to the 5S rRNA independently of L5 and L18.

This is one of the proteins that binds to the 5S RNA in the ribosome where it forms part of the central protuberance. The sequence is that of Large ribosomal subunit protein bL25 from Nostoc sp. (strain PCC 7120 / SAG 25.82 / UTEX 2576).